A 186-amino-acid chain; its full sequence is ATP-dependent protease subunit HslV (186 aa).

Residue threonine 14 is part of the active site. Residues alanine 168, cysteine 171, and threonine 174 each coordinate Na(+).

This sequence belongs to the peptidase T1B family. HslV subfamily. A double ring-shaped homohexamer of HslV is capped on each side by a ring-shaped HslU homohexamer. The assembly of the HslU/HslV complex is dependent on binding of ATP.

Its subcellular location is the cytoplasm. It carries out the reaction ATP-dependent cleavage of peptide bonds with broad specificity.. With respect to regulation, allosterically activated by HslU binding. Its function is as follows. Protease subunit of a proteasome-like degradation complex believed to be a general protein degrading machinery. The sequence is that of ATP-dependent protease subunit HslV from Methylorubrum extorquens (strain CM4 / NCIMB 13688) (Methylobacterium extorquens).